The primary structure comprises 259 residues: Leucine-rich repeat-containing protein 3B (259 aa).

The signal sequence occupies residues 1 to 33 (MNLVDLWLTRSLSMCLLLQSFVLMILCFHSASM). The LRRNT domain maps to 34–64 (CPKGCLCSSSGGLNVTCSNANLKEIPRDLPP). N47 carries N-linked (GlcNAc...) asparagine glycosylation. LRR repeat units lie at residues 65–86 (ETVL…IFKD), 89–110 (QLRV…AFKG), and 114–135 (TLQT…AFNN). An N-linked (GlcNAc...) asparagine glycan is attached at N94. The LRRCT domain maps to 145 to 197 (NPWHCDCTLQQVLRSMASNHETAHNVICKTSVLDEHAGRPFLNAANDADLCNL). Residues 205–225 (AMLVTMFGWFTMVISYVVYYV) form a helical membrane-spanning segment.

Belongs to the LRRC3 family.

The protein resides in the membrane. The chain is Leucine-rich repeat-containing protein 3B (LRRC3B) from Homo sapiens (Human).